Here is a 271-residue protein sequence, read N- to C-terminus: Elongation factor Ts (271 aa).

The segment at 76–79 is involved in Mg(2+) ion dislocation from EF-Tu; sequence TDFV.

The protein belongs to the EF-Ts family.

The protein resides in the cytoplasm. Its function is as follows. Associates with the EF-Tu.GDP complex and induces the exchange of GDP to GTP. It remains bound to the aminoacyl-tRNA.EF-Tu.GTP complex up to the GTP hydrolysis stage on the ribosome. This is Elongation factor Ts from Mycolicibacterium gilvum (strain PYR-GCK) (Mycobacterium gilvum (strain PYR-GCK)).